Consider the following 666-residue polypeptide: tRNA 5-methylaminomethyl-2-thiouridine biosynthesis bifunctional protein MnmC (666 aa).

The tract at residues 1–245 (MKQYAIQPAN…KREMLCGVMA (245 aa)) is tRNA (mnm(5)s(2)U34)-methyltransferase. Positions 270 to 666 (IGGGIASALL…RKLLKGKAVK (397 aa)) are FAD-dependent cmnm(5)s(2)U34 oxidoreductase.

In the N-terminal section; belongs to the methyltransferase superfamily. tRNA (mnm(5)s(2)U34)-methyltransferase family. This sequence in the C-terminal section; belongs to the DAO family. FAD is required as a cofactor.

It is found in the cytoplasm. It catalyses the reaction 5-aminomethyl-2-thiouridine(34) in tRNA + S-adenosyl-L-methionine = 5-methylaminomethyl-2-thiouridine(34) in tRNA + S-adenosyl-L-homocysteine + H(+). Catalyzes the last two steps in the biosynthesis of 5-methylaminomethyl-2-thiouridine (mnm(5)s(2)U) at the wobble position (U34) in tRNA. Catalyzes the FAD-dependent demodification of cmnm(5)s(2)U34 to nm(5)s(2)U34, followed by the transfer of a methyl group from S-adenosyl-L-methionine to nm(5)s(2)U34, to form mnm(5)s(2)U34. The sequence is that of tRNA 5-methylaminomethyl-2-thiouridine biosynthesis bifunctional protein MnmC from Citrobacter koseri (strain ATCC BAA-895 / CDC 4225-83 / SGSC4696).